The following is a 318-amino-acid chain: Ribose-phosphate pyrophosphokinase 2 (318 aa).

Residues aspartate 132, histidine 134, histidine 143, and aspartate 147 each contribute to the Mg(2+) site.

The protein belongs to the ribose-phosphate pyrophosphokinase family.

The protein resides in the cytoplasm. The enzyme catalyses D-ribose 5-phosphate + ATP = 5-phospho-alpha-D-ribose 1-diphosphate + AMP + H(+). It participates in metabolic intermediate biosynthesis; 5-phospho-alpha-D-ribose 1-diphosphate biosynthesis; 5-phospho-alpha-D-ribose 1-diphosphate from D-ribose 5-phosphate (route I): step 1/1. 5-phosphoribose 1-diphosphate synthase involved in nucleotide, histidine, and tryptophan biosynthesis. Active in heteromultimeric complexes with other 5-phosphoribose 1-diphosphate synthases (PRS2, PRS3, PRS4 and PRS5). The chain is Ribose-phosphate pyrophosphokinase 2 (PRS2) from Saccharomyces cerevisiae (strain ATCC 204508 / S288c) (Baker's yeast).